Reading from the N-terminus, the 108-residue chain is UPF0145 protein Fnod_0426 (108 aa).

Belongs to the UPF0145 family.

The chain is UPF0145 protein Fnod_0426 from Fervidobacterium nodosum (strain ATCC 35602 / DSM 5306 / Rt17-B1).